Here is a 651-residue protein sequence, read N- to C-terminus: Probable potassium transport system protein Kup (651 aa).

The next 12 helical transmembrane spans lie at 41–61 (LVLGALGVVYGDIGTSPIYAF), 82–102 (VVSLIFWALTLVVTIKYVLFV), 130–150 (LILGVGICGAALFFGDAVITP), 163–183 (IVAPDLTPFVVPITVVILVTL), 194–214 (VAIVFGPIMALWFLALGASGL), 235–255 (FLMISPGIAFITVGAVFLAMT), 276–296 (WLWIVFPCLLLNYFGQAAFIL), 309–329 (MMPSFALLPMVLLATAATVIA), 366–386 (IYIPRVNLLLGLAVVILVLGF), 395–415 (AYGIAVTGNMLVTTVLLYIVM), 426–446 (ALPIIVGFLIIDIMFFGANII), and 450–470 (EGGWASIGIAAILVLIMWTWV).

Belongs to the HAK/KUP transporter (TC 2.A.72) family.

The protein resides in the cell inner membrane. It carries out the reaction K(+)(in) + H(+)(in) = K(+)(out) + H(+)(out). In terms of biological role, transport of potassium into the cell. Likely operates as a K(+):H(+) symporter. In Brucella anthropi (strain ATCC 49188 / DSM 6882 / CCUG 24695 / JCM 21032 / LMG 3331 / NBRC 15819 / NCTC 12168 / Alc 37) (Ochrobactrum anthropi), this protein is Probable potassium transport system protein Kup.